A 155-amino-acid chain; its full sequence is uncharacterized protein (155 aa).

Transmembrane regions (helical) follow at residues 25 to 45 (LPMG…FGWT), 50 to 70 (IFWF…IMTS), 91 to 111 (GVKI…ESLF), and 118 to 138 (WGCT…PILF).

Belongs to the major facilitator superfamily. CAR1 family.

Its subcellular location is the membrane. This is an uncharacterized protein from Schizosaccharomyces pombe (strain 972 / ATCC 24843) (Fission yeast).